A 570-amino-acid polypeptide reads, in one-letter code: Urease subunit alpha (570 aa).

The region spanning 131-570 (GGMDSHIHFI…LPMAQRYFLF (440 aa)) is the Urease domain. Ni(2+) contacts are provided by His-136, His-138, and Lys-219. Lys-219 carries the post-translational modification N6-carboxylysine. His-221 lines the substrate pocket. His-248 and His-274 together coordinate Ni(2+). The active-site Proton donor is the His-322. Residue Asp-362 coordinates Ni(2+).

This sequence belongs to the metallo-dependent hydrolases superfamily. Urease alpha subunit family. Heterotrimer of UreA (gamma), UreB (beta) and UreC (alpha) subunits. Three heterotrimers associate to form the active enzyme. It depends on Ni cation as a cofactor. Post-translationally, carboxylation allows a single lysine to coordinate two nickel ions.

The protein localises to the cytoplasm. The enzyme catalyses urea + 2 H2O + H(+) = hydrogencarbonate + 2 NH4(+). The protein operates within nitrogen metabolism; urea degradation; CO(2) and NH(3) from urea (urease route): step 1/1. The protein is Urease subunit alpha of Sinorhizobium medicae (strain WSM419) (Ensifer medicae).